We begin with the raw amino-acid sequence, 389 residues long: MMLLSQPGIWLLVSLFLCSSVNSISLWKSHPLVAGSNEPDQKRPDTPSSPRPLGITGAALLNYFEQNLRTMEVPDTAGVPQDSAYYTALTHYLGLCGARSENCDPGQSAVAKLTRDVPVLTRVHSHNDYWRRVPLLQALAYGVASVEADVWLENNGTTLLVGHNRVFLEPAHDLGRLYIEPITRMLQEVNCKSENKGDPYGIFYNAPEEQLLLYIDFKSLDRKLTYKLLLDYLKPLIDNNFISYYDMDAKRFVSRPVTVVLTGNYPSDEEIGVPSPRRYTFLDAPLGRLSSVGDEFTANNVSVVASSSLLELMLRCGKASNPSLTEQTAWESYGCLVEYVREAHRRDLRARIWGLPDWPVSTRENLWDMLTDMGVDYLNVDDLDAVSKF.

Positions 1-23 (MMLLSQPGIWLLVSLFLCSSVNS) are cleaved as a signal peptide.

This sequence belongs to the AIM6 family.

This chain is Altered inheritance of mitochondria protein 6 (AIM6), found in Eremothecium gossypii (strain ATCC 10895 / CBS 109.51 / FGSC 9923 / NRRL Y-1056) (Yeast).